A 184-amino-acid polypeptide reads, in one-letter code: 2-C-methyl-D-erythritol 2,4-cyclodiphosphate synthase (184 aa).

Aspartate 17 and histidine 19 together coordinate a divalent metal cation. 4-CDP-2-C-methyl-D-erythritol 2-phosphate-binding positions include aspartate 17–histidine 19 and histidine 47–serine 48. Histidine 55 contacts a divalent metal cation. 4-CDP-2-C-methyl-D-erythritol 2-phosphate is bound by residues phenylalanine 74–aspartate 78, phenylalanine 152, and arginine 155.

It belongs to the IspF family. Homotrimer. A divalent metal cation serves as cofactor.

It catalyses the reaction 4-CDP-2-C-methyl-D-erythritol 2-phosphate = 2-C-methyl-D-erythritol 2,4-cyclic diphosphate + CMP. The protein operates within isoprenoid biosynthesis; isopentenyl diphosphate biosynthesis via DXP pathway; isopentenyl diphosphate from 1-deoxy-D-xylulose 5-phosphate: step 4/6. In terms of biological role, involved in the biosynthesis of isopentenyl diphosphate (IPP) and dimethylallyl diphosphate (DMAPP), two major building blocks of isoprenoid compounds. Catalyzes the conversion of 4-diphosphocytidyl-2-C-methyl-D-erythritol 2-phosphate (CDP-ME2P) to 2-C-methyl-D-erythritol 2,4-cyclodiphosphate (ME-CPP) with a corresponding release of cytidine 5-monophosphate (CMP). The chain is 2-C-methyl-D-erythritol 2,4-cyclodiphosphate synthase from Anaplasma marginale (strain St. Maries).